Here is a 216-residue protein sequence, read N- to C-terminus: Snake venom metalloproteinase HT-1 (216 aa).

One can recognise a Disintegrin domain in the interval 8-94 (PPVCGNELLE…DCPMDDFHRN (87 aa)). Ca(2+) is bound by residues Val10, Asn13, Leu15, Glu17, Glu20, and Asp23. Cystine bridges form between Cys11–Cys40, Cys22–Cys35, Cys24–Cys30, Cys34–Cys57, Cys48–Cys54, Cys53–Cys79, Cys66–Cys86, Cys73–Cys105, Cys98–Cys110, Cys117–Cys167, Cys132–Cys178, Cys145–Cys155, Cys162–Cys204, and Cys198–Cys209. The short motif at 72–74 (ECD) is the D/ECD-tripeptide element. The N-linked (GlcNAc...) asparagine glycan is linked to Asn175.

Belongs to the venom metalloproteinase (M12B) family. P-III subfamily. P-IIIa sub-subfamily. Monomer. Requires Zn(2+) as cofactor. In terms of tissue distribution, expressed by the venom gland.

Its subcellular location is the secreted. Zinc protease from snake venom that induces hemorrhage. The sequence is that of Snake venom metalloproteinase HT-1 from Crotalus ruber ruber (Red diamond rattlesnake).